A 425-amino-acid chain; its full sequence is CinA-like protein (425 aa).

It belongs to the CinA family.

In Desulfovibrio desulfuricans (strain ATCC 27774 / DSM 6949 / MB), this protein is CinA-like protein.